Here is a 525-residue protein sequence, read N- to C-terminus: GMP synthase [glutamine-hydrolyzing] (525 aa).

The Glutamine amidotransferase type-1 domain maps to 9 to 207; sequence RILILDFGSQ…VLDICQCEAL (199 aa). Residue Cys-86 is the Nucleophile of the active site. Residues His-181 and Glu-183 contribute to the active site. Residues 208–400 form the GMPS ATP-PPase domain; that stretch reads WTPATIIEDA…LGLPYDMLFR (193 aa). 235–241 provides a ligand contact to ATP; that stretch reads SGGVDSS.

In terms of assembly, homodimer.

The catalysed reaction is XMP + L-glutamine + ATP + H2O = GMP + L-glutamate + AMP + diphosphate + 2 H(+). The protein operates within purine metabolism; GMP biosynthesis; GMP from XMP (L-Gln route): step 1/1. Catalyzes the synthesis of GMP from XMP. This is GMP synthase [glutamine-hydrolyzing] from Serratia proteamaculans (strain 568).